A 294-amino-acid polypeptide reads, in one-letter code: Protein CHLOROPLAST J-LIKE DOMAIN 1, chloroplastic (294 aa).

The N-terminal 58 residues, 1–58 (MAPALSTSCSSVMAFSTSNALRYHHPQISLRNSLRAPKSPSFVRLPLGKVLQSRIVIR), are a transit peptide targeting the chloroplast. Over 59–164 (AASSAAGNPQ…GPRFSRSSKN (106 aa)) the chain is Stromal. The J-like domain stretch occupies residues 74-152 (NPYEVLGVNP…IKYADKQPII (79 aa)). The chain crosses the membrane as a helical span at residues 165–182 (DMLINLAISVVFSAWIAI). Over 183-233 (KRNVEYKPLQFMSFVFVYRIFEKLKSFEAPSSPIYNEEGEESGRGLRMGKR) the chain is Chloroplast intermembrane. Residues 234-256 (LLRSLSLVFGSILLASLAYTGFL) form a helical membrane-spanning segment. Residues 257–275 (NGIEYMGYSIPMVLYNNQE) lie on the Stromal side of the membrane. A helical membrane pass occupies residues 276-293 (LIVTASSAFMLYVIASFY). Arg294 is a topological domain (chloroplast intermembrane).

As to quaternary structure, interacts (via J-like domain) with ARC6 (via J domain).

The protein localises to the plastid. Its subcellular location is the chloroplast inner membrane. In terms of biological role, probably involved in the regulation of the fatty acid metabolic process in chloroplasts, especially chloroplastic galactolipids monogalactosyldiacylglycerol (MGDG) and digalactosyldiacylglycerol (DGDG). In Arabidopsis thaliana (Mouse-ear cress), this protein is Protein CHLOROPLAST J-LIKE DOMAIN 1, chloroplastic.